A 497-amino-acid polypeptide reads, in one-letter code: Cysteine--tRNA ligase (497 aa).

Cys-34 lines the Zn(2+) pocket. The 'HIGH' region signature appears at 36-46 (PTVYDFAHIGN). Cys-243, His-268, and Glu-272 together coordinate Zn(2+). The 'KMSKS' region motif lies at 301 to 305 (KMAKS). Lys-304 serves as a coordination point for ATP. The interval 478-497 (LMDYKDPETGERRTKWEVKR) is disordered. Residues 480–497 (DYKDPETGERRTKWEVKR) show a composition bias toward basic and acidic residues.

It belongs to the class-I aminoacyl-tRNA synthetase family. Monomer. The cofactor is Zn(2+).

The protein localises to the cytoplasm. It catalyses the reaction tRNA(Cys) + L-cysteine + ATP = L-cysteinyl-tRNA(Cys) + AMP + diphosphate. The polypeptide is Cysteine--tRNA ligase (Chelativorans sp. (strain BNC1)).